Reading from the N-terminus, the 663-residue chain is Protein LNK2 (663 aa).

2 disordered regions span residues 528–549 and 590–663; these read HYTSDTSHSNKTSQDDQEVIPR and MEGP…KRKL. Residues 602–629 are compositionally biased toward basic and acidic residues; sequence GTEEKGNFPKCSIRETHLTKQKAQKEEG. The segment covering 639 to 648 has biased composition (polar residues); that stretch reads APNSGSSSTV.

As to quaternary structure, interacts with CCA1, LHY, REV4 and REV8, but not with PRR7 or PRR9. Expressed in roots, stems, leaves, seedlings, cotyledons, inflorescences and siliques. Highest expression in root tips, young leaves and vasculatur tissues.

It localises to the nucleus. Functionally, transcriptional coactivator necessary for expression of the clock genes PRR5 and TOC1. Antagonizes REV8 function in the regulation of anthocyanin accumulation. Involved in red light input to the clock. Activates clock-controlled genes with afternoon peak. Mediates light inhibition of hypocotyl elongation. Unable to bind to DNA, but recruited to the evening element (EE)-containing region of the PRR5 and TOC1 promoters through its interaction with the DNA binding proteins REV8 and REV4. This Arabidopsis thaliana (Mouse-ear cress) protein is Protein LNK2.